The following is a 335-amino-acid chain: MIEFQNVHKTYRVDGRDIPALNPTSLTIEDGQVFGLIGHSGAGKSTMLRLINRLEAPSGGKIIVDGEDVTAFDANQLRRFRQQVGMIFQHFNLLASKTVADNVALPLVLAGELSRGEIDKRVTELLARVGLQDHARKYPAQLSGGQKQRVGIARALSTNPKILLCDEATSALDPQTTASVLQLLAEINRELKLTIVLITHEMDVIRRVCDRVAVMDAGKIVEQGPVAEVFLHPEHPTTKRFVQEDEQVDEGEQRDDFAHVPGRIVRLTFQGDATYAPLLGTVARETGVDYSILAGRIDRIKDVPYGQLTLALIGGDMEAAFARFKAADVHMEVLR.

One can recognise an ABC transporter domain in the interval 2–242 (IEFQNVHKTY…PEHPTTKRFV (241 aa)). 38 to 45 (GHSGAGKS) contacts ATP.

It belongs to the ABC transporter superfamily. Methionine importer (TC 3.A.1.24) family. As to quaternary structure, the complex is composed of two ATP-binding proteins (MetN), two transmembrane proteins (MetI) and a solute-binding protein (MetQ).

It localises to the cell inner membrane. It carries out the reaction L-methionine(out) + ATP + H2O = L-methionine(in) + ADP + phosphate + H(+). The catalysed reaction is D-methionine(out) + ATP + H2O = D-methionine(in) + ADP + phosphate + H(+). Part of the ABC transporter complex MetNIQ involved in methionine import. Responsible for energy coupling to the transport system. This chain is Methionine import ATP-binding protein MetN 2, found in Pseudomonas entomophila (strain L48).